We begin with the raw amino-acid sequence, 103 residues long: ATP-dependent Clp protease adapter protein ClpS (103 aa).

This sequence belongs to the ClpS family. Binds to the N-terminal domain of the chaperone ClpA.

Functionally, involved in the modulation of the specificity of the ClpAP-mediated ATP-dependent protein degradation. This Neisseria meningitidis serogroup A / serotype 4A (strain DSM 15465 / Z2491) protein is ATP-dependent Clp protease adapter protein ClpS.